Consider the following 450-residue polypeptide: F-box protein KIB3 (450 aa).

The region spanning 20 to 50 (DLVRLILERLSFVDFHRARCVSSTWYVASKS) is the F-box domain.

It localises to the cytoplasm. It is found in the nucleus. Its subcellular location is the nucleolus. Functionally, component of SCF(ASK-cullin-F-box) E3 ubiquitin ligase complexes, which may mediate the ubiquitination and subsequent proteasomal degradation of target proteins. Required for brassinosteroid (BR) signal transduction. Mediates ASK7/BIN2/SK21 inactivation both by competing with substrate binding (e.g. BZR1) and by promoting its ubiquitination and subsequent proteasomal degradation. The protein is F-box protein KIB3 of Arabidopsis thaliana (Mouse-ear cress).